Consider the following 737-residue polypeptide: Propionyl-CoA carboxylase alpha chain, mitochondrial (737 aa).

The transit peptide at 1 to 61 (MAGLWVRTVA…QCLVVSRSLS (61 aa)) directs the protein to the mitochondrion. The Biotin carboxylation domain maps to 71–518 (TFDKILIANR…STKFLSDVYP (448 aa)). Residue lysine 74 is modified to N6-acetyllysine; alternate. Lysine 74 is modified (N6-succinyllysine; alternate). Lysine 128 carries the N6-succinyllysine modification. An N6-acetyllysine; alternate modification is found at lysine 159. Lysine 159 is subject to N6-succinyllysine; alternate. An N6-acetyllysine modification is found at lysine 163. Lysine 186 provides a ligand contact to ATP. An ATP-grasp domain is found at 190–387 (KLLAKRAKVN…LVQEMILVAK (198 aa)). Lysine 197 carries the N6-succinyllysine modification. Lysine 209 carries the post-translational modification N6-acetyllysine; alternate. Residue lysine 209 is modified to N6-succinyllysine; alternate. ATP is bound by residues 218–279 (AREI…PRHI), glutamate 270, and asparagine 305. Serine 261 is modified (phosphoserine). Residue lysine 271 is modified to N6-succinyllysine. Lysine 337 carries the post-translational modification N6-acetyllysine; alternate. Position 337 is an N6-succinyllysine; alternate (lysine 337). Glutamate 345, glutamate 358, and asparagine 360 together coordinate Mg(2+). 3 residues coordinate Mn(2+): glutamate 345, glutamate 358, and asparagine 360. Arginine 362 is a catalytic residue. N6-succinyllysine occurs at positions 394 and 416. Residue phenylalanine 418 participates in biotin binding. Lysine 505 carries the N6-acetyllysine modification. Residues lysine 511, lysine 522, lysine 567, and lysine 657 each carry the N6-succinyllysine modification. The Biotinyl-binding domain occupies 658-737 (FMLEKVPKDT…GEGDLLVELE (80 aa)). N6-biotinyllysine; by HLCS is present on lysine 703.

As to quaternary structure, the holoenzyme is a dodecamer composed of 6 PCCA/alpha subunits and 6 PCCB/beta subunits. Interacts (via the biotin carboxylation domain) with SIRT4. Interacts with SIRT3 and SIRT5. Requires biotin as cofactor. The cofactor is Mg(2+). Mn(2+) is required as a cofactor. Post-translationally, acetylated. In terms of processing, the biotin cofactor is covalently attached to the C-terminal biotinyl-binding domain and is required for the catalytic activity. Biotinylation is catalyzed by HLCS.

It localises to the mitochondrion matrix. The catalysed reaction is propanoyl-CoA + hydrogencarbonate + ATP = (S)-methylmalonyl-CoA + ADP + phosphate + H(+). It carries out the reaction butanoyl-CoA + hydrogencarbonate + ATP = (2S)-ethylmalonyl-CoA + ADP + phosphate + H(+). It functions in the pathway metabolic intermediate metabolism; propanoyl-CoA degradation; succinyl-CoA from propanoyl-CoA: step 1/3. In terms of biological role, this is one of the 2 subunits of the biotin-dependent propionyl-CoA carboxylase (PCC), a mitochondrial enzyme involved in the catabolism of odd chain fatty acids, branched-chain amino acids isoleucine, threonine, methionine, and valine and other metabolites. Propionyl-CoA carboxylase catalyzes the carboxylation of propionyl-CoA/propanoyl-CoA to D-methylmalonyl-CoA/(S)-methylmalonyl-CoA. Within the holoenzyme, the alpha subunit catalyzes the ATP-dependent carboxylation of the biotin carried by the biotin carboxyl carrier (BCC) domain, while the beta subunit then transfers the carboxyl group from carboxylated biotin to propionyl-CoA. Propionyl-CoA carboxylase also significantly acts on butyryl-CoA/butanoyl-CoA, which is converted to ethylmalonyl-CoA/(2S)-ethylmalonyl-CoA. Other alternative minor substrates include (2E)-butenoyl-CoA/crotonoyl-CoA. The chain is Propionyl-CoA carboxylase alpha chain, mitochondrial from Rattus norvegicus (Rat).